A 207-amino-acid polypeptide reads, in one-letter code: Hydrogenase expression/formation protein HoxM (207 aa).

Positions 19, 65, and 96 each coordinate Ni(2+).

The protein belongs to the peptidase A31 family.

Not known. Could be involved in the processing of hydrogenase. The chain is Hydrogenase expression/formation protein HoxM (hoxM) from Azotobacter vinelandii.